The sequence spans 200 residues: Holliday junction branch migration complex subunit RuvA (200 aa).

Residues 1–64 (MIGHLRGIIV…EDAHTLYGFH (64 aa)) are domain I. The tract at residues 65–143 (NDHERRLFRA…RWHTNDTPSP (79 aa)) is domain II. The interval 133-152 (SRWHTNDTPSPEGLRSSNTQ) is disordered. The interval 144-148 (EGLRS) is flexible linker. The tract at residues 149–200 (SNTQPTQDAISALMALGYKPQEAKRAIDAIQKPDLSAETLIRLALKQMVLGT) is domain III.

This sequence belongs to the RuvA family. As to quaternary structure, homotetramer. Forms an RuvA(8)-RuvB(12)-Holliday junction (HJ) complex. HJ DNA is sandwiched between 2 RuvA tetramers; dsDNA enters through RuvA and exits via RuvB. An RuvB hexamer assembles on each DNA strand where it exits the tetramer. Each RuvB hexamer is contacted by two RuvA subunits (via domain III) on 2 adjacent RuvB subunits; this complex drives branch migration. In the full resolvosome a probable DNA-RuvA(4)-RuvB(12)-RuvC(2) complex forms which resolves the HJ.

It localises to the cytoplasm. The RuvA-RuvB-RuvC complex processes Holliday junction (HJ) DNA during genetic recombination and DNA repair, while the RuvA-RuvB complex plays an important role in the rescue of blocked DNA replication forks via replication fork reversal (RFR). RuvA specifically binds to HJ cruciform DNA, conferring on it an open structure. The RuvB hexamer acts as an ATP-dependent pump, pulling dsDNA into and through the RuvAB complex. HJ branch migration allows RuvC to scan DNA until it finds its consensus sequence, where it cleaves and resolves the cruciform DNA. The chain is Holliday junction branch migration complex subunit RuvA from Coxiella burnetii (strain Dugway 5J108-111).